Reading from the N-terminus, the 231-residue chain is Ion-translocating oxidoreductase complex subunit E (231 aa).

6 helical membrane-spanning segments follow: residues 18 to 38, 39 to 59, 63 to 83, 86 to 106, 125 to 145, and 182 to 202; these read ALVQ…ATNA, LGLG…ISTL, TPSE…VSAV, LINA…PLIV, ALSA…MFVL, and PFLL…MLAG.

Belongs to the NqrDE/RnfAE family. In terms of assembly, the complex is composed of six subunits: RsxA, RsxB, RsxC, RsxD, RsxE and RsxG.

The protein resides in the cell inner membrane. Functionally, part of a membrane-bound complex that couples electron transfer with translocation of ions across the membrane. Required to maintain the reduced state of SoxR. The sequence is that of Ion-translocating oxidoreductase complex subunit E from Escherichia coli O6:K15:H31 (strain 536 / UPEC).